A 293-amino-acid chain; its full sequence is ATP synthase gamma chain (293 aa).

This sequence belongs to the ATPase gamma chain family. As to quaternary structure, F-type ATPases have 2 components, CF(1) - the catalytic core - and CF(0) - the membrane proton channel. CF(1) has five subunits: alpha(3), beta(3), gamma(1), delta(1), epsilon(1). CF(0) has three main subunits: a, b and c.

The protein localises to the cell membrane. Produces ATP from ADP in the presence of a proton gradient across the membrane. The gamma chain is believed to be important in regulating ATPase activity and the flow of protons through the CF(0) complex. The polypeptide is ATP synthase gamma chain (Streptococcus agalactiae serotype Ia (strain ATCC 27591 / A909 / CDC SS700)).